Reading from the N-terminus, the 34-residue chain is Photosystem II reaction center protein M (34 aa).

Residues 5-25 (ILGLTATALFIIIPTSFLLIL) form a helical membrane-spanning segment.

It belongs to the PsbM family. As to quaternary structure, PSII is composed of 1 copy each of membrane proteins PsbA, PsbB, PsbC, PsbD, PsbE, PsbF, PsbH, PsbI, PsbJ, PsbK, PsbL, PsbM, PsbT, PsbX, PsbY, PsbZ, Psb30/Ycf12, at least 3 peripheral proteins of the oxygen-evolving complex and a large number of cofactors. It forms dimeric complexes.

Its subcellular location is the plastid. It is found in the chloroplast thylakoid membrane. One of the components of the core complex of photosystem II (PSII). PSII is a light-driven water:plastoquinone oxidoreductase that uses light energy to abstract electrons from H(2)O, generating O(2) and a proton gradient subsequently used for ATP formation. It consists of a core antenna complex that captures photons, and an electron transfer chain that converts photonic excitation into a charge separation. This subunit is found at the monomer-monomer interface. This is Photosystem II reaction center protein M from Stigeoclonium helveticum (Green alga).